A 298-amino-acid chain; its full sequence is ATP phosphoribosyltransferase (298 aa).

This sequence belongs to the ATP phosphoribosyltransferase family. Long subfamily. The cofactor is Mg(2+).

Its subcellular location is the cytoplasm. The catalysed reaction is 1-(5-phospho-beta-D-ribosyl)-ATP + diphosphate = 5-phospho-alpha-D-ribose 1-diphosphate + ATP. The protein operates within amino-acid biosynthesis; L-histidine biosynthesis; L-histidine from 5-phospho-alpha-D-ribose 1-diphosphate: step 1/9. Feedback inhibited by histidine. Functionally, catalyzes the condensation of ATP and 5-phosphoribose 1-diphosphate to form N'-(5'-phosphoribosyl)-ATP (PR-ATP). Has a crucial role in the pathway because the rate of histidine biosynthesis seems to be controlled primarily by regulation of HisG enzymatic activity. The protein is ATP phosphoribosyltransferase of Aeromonas hydrophila subsp. hydrophila (strain ATCC 7966 / DSM 30187 / BCRC 13018 / CCUG 14551 / JCM 1027 / KCTC 2358 / NCIMB 9240 / NCTC 8049).